A 147-amino-acid chain; its full sequence is Myoglobin (147 aa).

Positions 2 to 141 (HDAELVLKCW…VIGDIDTYYK (140 aa)) constitute a Globin domain. A nitrite-binding site is contributed by histidine 60. An O2-binding site is contributed by histidine 60. Residue histidine 89 coordinates heme b.

It belongs to the globin family. In terms of assembly, monomeric.

The protein resides in the cytoplasm. It is found in the sarcoplasm. It carries out the reaction Fe(III)-heme b-[protein] + nitric oxide + H2O = Fe(II)-heme b-[protein] + nitrite + 2 H(+). The catalysed reaction is H2O2 + AH2 = A + 2 H2O. Its function is as follows. Monomeric heme protein which primary function is to store oxygen and facilitate its diffusion within muscle tissues. Reversibly binds oxygen through a pentacoordinated heme iron and enables its timely and efficient release as needed during periods of heightened demand. Depending on the oxidative conditions of tissues and cells, and in addition to its ability to bind oxygen, it also has a nitrite reductase activity whereby it regulates the production of bioactive nitric oxide. Under stress conditions, like hypoxia and anoxia, it also protects cells against reactive oxygen species thanks to its pseudoperoxidase activity. The polypeptide is Myoglobin (mb) (Cyprinus carpio (Common carp)).